Reading from the N-terminus, the 91-residue chain is Potassium channel toxin TtrKIK (91 aa).

The N-terminal stretch at 1–25 (MVATNRCCVFALLFALLLVHSLTEA) is a signal peptide. The propeptide occupies 26–44 (GKGKEVLGKIKDKLIEAKD). The region spanning 58-91 (EYACPAIEKFCEDHCAAKKAVGKCDDFKCNCIKL) is the BetaSPN-type CS-alpha/beta domain. 3 cysteine pairs are disulfide-bonded: C61–C81, C68–C86, and C72–C88.

Belongs to the long chain scorpion toxin family. Class 2 subfamily. As to expression, expressed by the venom gland.

Its subcellular location is the secreted. The full peptide presents antibacterial and cytotoxic activities. The synthetic C-terminus (AA 33-76) inhibits voltage-gated potassium channels Kv1.1/KCNA1, Kv1.2/KCNA2, and Kv1.3/KCNA3. The sequence is that of Potassium channel toxin TtrKIK from Tityus trivittatus (Argentinean scorpion).